The chain runs to 355 residues: MYHKRIKEAIEAIKQGEMIIIMDDEDRENEGDLVMAGIFSSPQKINFMAQEARGLICVSITQELAQKLDLPPMVQKNDSNHETAFTISIDAKEAKTGISAFERDMTIRLMCESNTKPSDFVRPGHIFPLIAKEGGVLVRTGHTEASVDICRLAGVAPISVICEIMKKDGTMAGRGDKFLLDFASQHHLKILYVSDIIQYRLNFENLLREITRESAVFMGVECEKITFIDHLEREHIVFGFPHKGSSSNEPKPLIRFHNVRSDLELLQNAQEWNALLKSIECLKEKGGYLVFLNTHSEYANSSKTCGDIKDFGIGAQILKRLGIEDFVLLSSCGGSKGEYNALSGFNLHLVEKIEV.

Residues 1–202 (MYHKRIKEAI…VSDIIQYRLN (202 aa)) form a DHBP synthase region. Residues 27–28 (RE), D32, 139–143 (RTGHT), and E163 each bind D-ribulose 5-phosphate. Mg(2+) is bound at residue E28. Residue H142 coordinates Mg(2+). The tract at residues 203-355 (FENLLREITR…NLHLVEKIEV (153 aa)) is GTP cyclohydrolase II-like.

This sequence in the N-terminal section; belongs to the DHBP synthase family. In the C-terminal section; belongs to the GTP cyclohydrolase II family. The cofactor is Mg(2+). It depends on Mn(2+) as a cofactor.

The catalysed reaction is D-ribulose 5-phosphate = (2S)-2-hydroxy-3-oxobutyl phosphate + formate + H(+). Its pathway is cofactor biosynthesis; riboflavin biosynthesis; 2-hydroxy-3-oxobutyl phosphate from D-ribulose 5-phosphate: step 1/1. In terms of biological role, catalyzes the conversion of D-ribulose 5-phosphate to formate and 3,4-dihydroxy-2-butanone 4-phosphate. This chain is 3,4-dihydroxy-2-butanone 4-phosphate synthase (ribB), found in Helicobacter hepaticus (strain ATCC 51449 / 3B1).